Reading from the N-terminus, the 440-residue chain is T-box transcription factor TBX20 (440 aa).

Residues 103–282 (LWDKFHELGT…SNPFAKGFRD (180 aa)) constitute a DNA-binding region (T-box). The tract at residues 308–333 (IRTYGGEDDLGDDSQATQSRGSAFTT) is disordered. The span at 321–333 (SQATQSRGSAFTT) shows a compositional bias: polar residues.

The protein resides in the nucleus. Acts as a transcriptional regulator involved in heart developmental processes. This Gallus gallus (Chicken) protein is T-box transcription factor TBX20 (TBX20).